The sequence spans 194 residues: Xanthine phosphoribosyltransferase (194 aa).

Xanthine-binding residues include L20 and N27. 128-132 contributes to the 5-phospho-alpha-D-ribose 1-diphosphate binding site; sequence ANGQA. Residue K156 participates in xanthine binding.

The protein belongs to the purine/pyrimidine phosphoribosyltransferase family. Xpt subfamily. Homodimer.

The protein localises to the cytoplasm. The enzyme catalyses XMP + diphosphate = xanthine + 5-phospho-alpha-D-ribose 1-diphosphate. The protein operates within purine metabolism; XMP biosynthesis via salvage pathway; XMP from xanthine: step 1/1. In terms of biological role, converts the preformed base xanthine, a product of nucleic acid breakdown, to xanthosine 5'-monophosphate (XMP), so it can be reused for RNA or DNA synthesis. This chain is Xanthine phosphoribosyltransferase, found in Geobacillus thermodenitrificans (strain NG80-2).